The sequence spans 179 residues: Large ribosomal subunit protein uL5 (179 aa).

Belongs to the universal ribosomal protein uL5 family. As to quaternary structure, part of the 50S ribosomal subunit; part of the 5S rRNA/L5/L18/L25 subcomplex. Contacts the 5S rRNA and the P site tRNA. Forms a bridge to the 30S subunit in the 70S ribosome.

Its function is as follows. This is one of the proteins that bind and probably mediate the attachment of the 5S RNA into the large ribosomal subunit, where it forms part of the central protuberance. In the 70S ribosome it contacts protein S13 of the 30S subunit (bridge B1b), connecting the 2 subunits; this bridge is implicated in subunit movement. Contacts the P site tRNA; the 5S rRNA and some of its associated proteins might help stabilize positioning of ribosome-bound tRNAs. This Mannheimia succiniciproducens (strain KCTC 0769BP / MBEL55E) protein is Large ribosomal subunit protein uL5.